A 494-amino-acid chain; its full sequence is Lysine--tRNA ligase (494 aa).

Positions 405 and 412 each coordinate Mg(2+).

Belongs to the class-II aminoacyl-tRNA synthetase family. As to quaternary structure, homodimer. Requires Mg(2+) as cofactor.

The protein localises to the cytoplasm. The catalysed reaction is tRNA(Lys) + L-lysine + ATP = L-lysyl-tRNA(Lys) + AMP + diphosphate. The protein is Lysine--tRNA ligase (lysS) of Geobacillus stearothermophilus (Bacillus stearothermophilus).